Reading from the N-terminus, the 625-residue chain is Probable inactive receptor kinase At5g16590 (625 aa).

An N-terminal signal peptide occupies residues 1 to 23 (MKNKTNLGLSVFFFFICLVSVTS). LRR repeat units lie at residues 88–111 (KLET…ANLT), 112–134 (LLRY…LFTL), 136–158 (NIIR…VNSA), 160–182 (RLAT…KIKL), and 183–204 (QQFN…SGMP). Residues 246-266 (AIVGIVIGCFVLLLVLFLIVF) traverse the membrane as a helical segment. A Protein kinase domain is found at 343-613 (KASAEVLGKG…PEVTRLIEEV (271 aa)). Ser345 carries the phosphoserine modification. ATP-binding positions include 349-357 (LGKGTFGSS) and Lys371. A Phosphoserine modification is found at Ser422. A phosphothreonine mark is found at Thr442 and Thr496. Position 517 is a phosphoserine (Ser517). Thr593 bears the Phosphothreonine mark. Residues Ser619 and Ser624 each carry the phosphoserine modification.

This sequence belongs to the protein kinase superfamily. Ser/Thr protein kinase family.

It is found in the cell membrane. In terms of biological role, might be involved in early recognition of growth promoting fungi. Appears to be specific for P.indica. This is Probable inactive receptor kinase At5g16590 from Arabidopsis thaliana (Mouse-ear cress).